The sequence spans 482 residues: Probable F-box protein At1g30780 (482 aa).

Residues 230–280 enclose the F-box domain; it reads EIDLDSLPFDLKMVILTRLSAKSLTNFKRVSKMWSSIIGSQRFIDSFFTMS.

The chain is Probable F-box protein At1g30780 from Arabidopsis thaliana (Mouse-ear cress).